The chain runs to 72 residues: Large ribosomal subunit protein bL31c (72 aa).

The protein belongs to the bacterial ribosomal protein bL31 family. Type A subfamily. In terms of assembly, part of the 50S ribosomal subunit.

Its subcellular location is the plastid. The protein localises to the chloroplast. In terms of biological role, binds the 23S rRNA. The polypeptide is Large ribosomal subunit protein bL31c (rpl31) (Phaeodactylum tricornutum (strain CCAP 1055/1)).